Here is a 539-residue protein sequence, read N- to C-terminus: CTP synthase (539 aa).

The tract at residues 1-267 (MTKFIFVTGG…DDLVIKRLDL (267 aa)) is amidoligase domain. Serine 13 provides a ligand contact to CTP. Serine 13 is a UTP binding site. Residue 14–19 (SLGKGI) coordinates ATP. Tyrosine 54 is a binding site for L-glutamine. Aspartate 71 is an ATP binding site. 2 residues coordinate Mg(2+): aspartate 71 and glutamate 141. Residues 148-150 (DIE), 188-193 (KTKPTQ), and lysine 224 contribute to the CTP site. Residues 188–193 (KTKPTQ) and lysine 224 each bind UTP. ATP is bound at residue 240 to 242 (RDA). Residues 293–535 (TIGLVGKYVS…IEAANKYKEA (243 aa)) form the Glutamine amidotransferase type-1 domain. Glycine 355 contacts L-glutamine. The Nucleophile; for glutamine hydrolysis role is filled by cysteine 382. Residues 383 to 386 (LGMQ), glutamate 406, and arginine 463 contribute to the L-glutamine site. Residues histidine 508 and glutamate 510 contribute to the active site.

The protein belongs to the CTP synthase family. As to quaternary structure, homotetramer.

The enzyme catalyses UTP + L-glutamine + ATP + H2O = CTP + L-glutamate + ADP + phosphate + 2 H(+). It carries out the reaction L-glutamine + H2O = L-glutamate + NH4(+). It catalyses the reaction UTP + NH4(+) + ATP = CTP + ADP + phosphate + 2 H(+). The protein operates within pyrimidine metabolism; CTP biosynthesis via de novo pathway; CTP from UDP: step 2/2. With respect to regulation, allosterically activated by GTP, when glutamine is the substrate; GTP has no effect on the reaction when ammonia is the substrate. The allosteric effector GTP functions by stabilizing the protein conformation that binds the tetrahedral intermediate(s) formed during glutamine hydrolysis. Inhibited by the product CTP, via allosteric rather than competitive inhibition. Its function is as follows. Catalyzes the ATP-dependent amination of UTP to CTP with either L-glutamine or ammonia as the source of nitrogen. Regulates intracellular CTP levels through interactions with the four ribonucleotide triphosphates. The protein is CTP synthase of Staphylococcus carnosus (strain TM300).